The chain runs to 113 residues: Protein PucD (113 aa).

Its function is as follows. Seems to be required for the LH-II stabilization. The protein is Protein PucD (pucD) of Rhodobacter capsulatus (Rhodopseudomonas capsulata).